We begin with the raw amino-acid sequence, 211 residues long: Large ribosomal subunit protein eL13 (211 aa).

Belongs to the eukaryotic ribosomal protein eL13 family. As to quaternary structure, component of the 60S large ribosomal subunit (LSU).

The protein resides in the cytoplasm. In terms of biological role, component of the ribosome, a large ribonucleoprotein complex responsible for the synthesis of proteins in the cell. The small ribosomal subunit (SSU) binds messenger RNAs (mRNAs) and translates the encoded message by selecting cognate aminoacyl-transfer RNA (tRNA) molecules. The large subunit (LSU) contains the ribosomal catalytic site termed the peptidyl transferase center (PTC), which catalyzes the formation of peptide bonds, thereby polymerizing the amino acids delivered by tRNAs into a polypeptide chain. The nascent polypeptides leave the ribosome through a tunnel in the LSU and interact with protein factors that function in enzymatic processing, targeting, and the membrane insertion of nascent chains at the exit of the ribosomal tunnel. As part of the LSU, it is probably required for its formation and the maturation of rRNAs. The sequence is that of Large ribosomal subunit protein eL13 (rpl13) from Ictalurus punctatus (Channel catfish).